The chain runs to 142 residues: Large ribosomal subunit protein mL43 (142 aa).

Belongs to the mitochondrion-specific ribosomal protein mL43 family. In terms of assembly, component of the mitochondrial large ribosomal subunit. Mature mitochondrial ribosomes consist of a small (37S) and a large (54S) subunit. The 37S subunit contains at least 33 different proteins and 1 molecule of RNA (15S). The 54S subunit contains at least 45 different proteins and 1 molecule of RNA (21S).

The protein resides in the mitochondrion. The polypeptide is Large ribosomal subunit protein mL43 (MRPL51) (Eremothecium gossypii (strain ATCC 10895 / CBS 109.51 / FGSC 9923 / NRRL Y-1056) (Yeast)).